A 108-amino-acid chain; its full sequence is Small ribosomal subunit protein uS10 (108 aa).

The protein belongs to the universal ribosomal protein uS10 family. As to quaternary structure, part of the 30S ribosomal subunit.

Functionally, involved in the binding of tRNA to the ribosomes. This Ehrlichia canis (strain Jake) protein is Small ribosomal subunit protein uS10.